Reading from the N-terminus, the 548-residue chain is Probable bifunctional tRNA threonylcarbamoyladenosine biosynthesis protein (548 aa).

A kae1 region spans residues 1 to 338 (MRILGIEGTA…FRPDEVAVTW (338 aa)). 2 residues coordinate Fe cation: His122 and His126. Residues 143–147 (NASGA), Asp175, Gly188, Glu192, and Asn271 each bind L-threonylcarbamoyladenylate. Asp299 provides a ligand contact to Fe cation. A Protein kinase domain is found at 349–548 (RMGGDEVQGA…DDIEGRGRYQ (200 aa)). ATP-binding positions include 355 to 362 (VQGAEATV) and Lys371. The span at 390 to 404 (ERTRQEARLTSEARR) shows a compositional bias: basic and acidic residues. The disordered stretch occupies residues 390–413 (ERTRQEARLTSEARRNGVPTPLVR). The active-site Proton acceptor; for kinase activity is Asp460.

It in the N-terminal section; belongs to the KAE1 / TsaD family. This sequence in the C-terminal section; belongs to the protein kinase superfamily. Tyr protein kinase family. BUD32 subfamily. In terms of assembly, component of the KEOPS complex that consists of Kae1, Bud32, Cgi121 and Pcc1; the whole complex dimerizes. Fe(2+) serves as cofactor.

It is found in the cytoplasm. It carries out the reaction L-seryl-[protein] + ATP = O-phospho-L-seryl-[protein] + ADP + H(+). The enzyme catalyses L-threonyl-[protein] + ATP = O-phospho-L-threonyl-[protein] + ADP + H(+). It catalyses the reaction L-threonylcarbamoyladenylate + adenosine(37) in tRNA = N(6)-L-threonylcarbamoyladenosine(37) in tRNA + AMP + H(+). Its function is as follows. Required for the formation of a threonylcarbamoyl group on adenosine at position 37 (t(6)A37) in tRNAs that read codons beginning with adenine. Is a component of the KEOPS complex that is probably involved in the transfer of the threonylcarbamoyl moiety of threonylcarbamoyl-AMP (TC-AMP) to the N6 group of A37. The Kae1 domain likely plays a direct catalytic role in this reaction. The Bud32 domain probably displays kinase activity that regulates Kae1 function. The chain is Probable bifunctional tRNA threonylcarbamoyladenosine biosynthesis protein from Haloarcula marismortui (strain ATCC 43049 / DSM 3752 / JCM 8966 / VKM B-1809) (Halobacterium marismortui).